The chain runs to 883 residues: Translation initiation factor IF-2 (883 aa).

The span at 32–45 shows a compositional bias: polar residues; sequence NDLNGKNNSNSSIN. Disordered stretches follow at residues 32–216 and 251–275; these read NDLN…QNKY and RKLG…AETE. Positions 46 to 62 are enriched in basic and acidic residues; sequence LDKHNNKVEYSQNRDNR. Over residues 75–216 the composition is skewed to polar residues; sequence GGYSQNRDNR…VGKNTSQNKY (142 aa). Residues 251 to 260 are compositionally biased toward basic and acidic residues; sequence RKLGEKKKQQ. Residues 381–554 enclose the tr-type G domain; it reads EKPPVITIMG…DMMLLKANPS (174 aa). The tract at residues 390-397 is G1; it reads GHVDHGKT. Residue 390-397 coordinates GTP; the sequence is GHVDHGKT. The G2 stretch occupies residues 415-419; sequence GITQH. The G3 stretch occupies residues 436–439; that stretch reads DTPG. GTP contacts are provided by residues 436-440 and 490-493; these read DTPGH and NKID. The interval 490 to 493 is G4; the sequence is NKID. The segment at 526-528 is G5; sequence SAL.

Belongs to the TRAFAC class translation factor GTPase superfamily. Classic translation factor GTPase family. IF-2 subfamily.

It localises to the cytoplasm. One of the essential components for the initiation of protein synthesis. Protects formylmethionyl-tRNA from spontaneous hydrolysis and promotes its binding to the 30S ribosomal subunits. Also involved in the hydrolysis of GTP during the formation of the 70S ribosomal complex. This Borrelia garinii subsp. bavariensis (strain ATCC BAA-2496 / DSM 23469 / PBi) (Borreliella bavariensis) protein is Translation initiation factor IF-2.